An 896-amino-acid polypeptide reads, in one-letter code: Valine--tRNA ligase (896 aa).

The 'HIGH' region signature appears at Pro43–His53. The 'KMSKS' region signature appears at Lys545 to Ser549. ATP is bound at residue Lys548. Residues Asp831 to Leu857 are a coiled coil.

Belongs to the class-I aminoacyl-tRNA synthetase family. ValS type 1 subfamily. Monomer.

Its subcellular location is the cytoplasm. The catalysed reaction is tRNA(Val) + L-valine + ATP = L-valyl-tRNA(Val) + AMP + diphosphate. In terms of biological role, catalyzes the attachment of valine to tRNA(Val). As ValRS can inadvertently accommodate and process structurally similar amino acids such as threonine, to avoid such errors, it has a 'posttransfer' editing activity that hydrolyzes mischarged Thr-tRNA(Val) in a tRNA-dependent manner. The sequence is that of Valine--tRNA ligase from Rhizorhabdus wittichii (strain DSM 6014 / CCUG 31198 / JCM 15750 / NBRC 105917 / EY 4224 / RW1) (Sphingomonas wittichii).